A 228-amino-acid polypeptide reads, in one-letter code: Probable septum site-determining protein MinC (228 aa).

This sequence belongs to the MinC family. As to quaternary structure, interacts with MinD and FtsZ.

Its function is as follows. Cell division inhibitor that blocks the formation of polar Z ring septums. Rapidly oscillates between the poles of the cell to destabilize FtsZ filaments that have formed before they mature into polar Z rings. Prevents FtsZ polymerization. This chain is Probable septum site-determining protein MinC, found in Yersinia enterocolitica serotype O:8 / biotype 1B (strain NCTC 13174 / 8081).